The primary structure comprises 345 residues: Phosphoribosylformylglycinamidine cyclo-ligase (345 aa).

This sequence belongs to the AIR synthase family.

It is found in the cytoplasm. The catalysed reaction is 2-formamido-N(1)-(5-O-phospho-beta-D-ribosyl)acetamidine + ATP = 5-amino-1-(5-phospho-beta-D-ribosyl)imidazole + ADP + phosphate + H(+). It functions in the pathway purine metabolism; IMP biosynthesis via de novo pathway; 5-amino-1-(5-phospho-D-ribosyl)imidazole from N(2)-formyl-N(1)-(5-phospho-D-ribosyl)glycinamide: step 2/2. The sequence is that of Phosphoribosylformylglycinamidine cyclo-ligase from Anaeromyxobacter dehalogenans (strain 2CP-C).